The chain runs to 435 residues: uncharacterized protein (435 aa).

The S-adenosyl-L-methionine site is built by Gln-261, Tyr-294, Glu-318, and Asp-366. Cys-393 (nucleophile) is an active-site residue.

The protein belongs to the class I-like SAM-binding methyltransferase superfamily. RNA M5U methyltransferase family.

This is an uncharacterized protein from Bifidobacterium longum (strain NCC 2705).